We begin with the raw amino-acid sequence, 2008 residues long: Histone-lysine N-methyltransferase SETD1B (2008 aa).

Over residues 1-20 the composition is skewed to basic and acidic residues; sequence MSFREIKAGEKAKHPEDHGK. Residues 1-42 are disordered; sequence MSFREIKAGEKAKHPEDHGKKQSSSWINGMENSTQASTSVEK. The span at 22–39 shows a compositional bias: polar residues; the sequence is QSSSWINGMENSTQASTS. The 89-residue stretch at 111 to 199 folds into the RRM domain; sequence DEFYVGPVPP…NIIHVELDTK (89 aa). 9 disordered regions span residues 249 to 390, 402 to 652, 682 to 725, 950 to 1172, 1309 to 1328, 1345 to 1461, 1563 to 1600, 1674 to 1712, and 1814 to 1842; these read NLSS…SSYK, FPQS…APIT, PPGF…PPLP, RKEP…DKRE, TKLP…PGRE, VPSS…FTPT, VGAS…MYSG, KEEE…PQFR, and EEPP…RRSE. The segment covering 251-264 has biased composition (low complexity); that stretch reads SSVGSSVTPNSSTP. Composition is skewed to polar residues over residues 265-293, 301-315, 360-381, 405-414, and 456-491; these read FSHD…QGTP, PFSQ…QTTP, HQFS…TPPL, SEEQPFAQTS, and DSNS…QHNS. The span at 492–521 shows a compositional bias: basic and acidic residues; the sequence is LDSRIEMLLKEQRTKLPFLNEHDSDNEVRM. Positions 524-537 are enriched in low complexity; the sequence is SPISSSSSQLSPIP. 2 stretches are compositionally biased toward polar residues: residues 540 to 560 and 582 to 604; these read GSNS…SSTG and ASLN…QLNR. Composition is skewed to basic and acidic residues over residues 606-617 and 626-636; these read SKVETLEVKEMV and EKMDESQHSSG. Residues 637 to 646 are compositionally biased toward acidic residues; it reads EDMEISDDEM. Basic and acidic residues predominate over residues 979-997; the sequence is ERDRDASDTTSDLSKKDAE. A compositionally biased stretch (acidic residues) spans 1011–1020; that stretch reads LDSEGEEGDE. Residues 1021–1031 are compositionally biased toward basic and acidic residues; that stretch reads TSGKEEESSSE. 2 stretches are compositionally biased toward acidic residues: residues 1050 to 1094 and 1105 to 1149; these read EEEE…EEDA and ESSD…EDQD. The segment covering 1150–1172 has biased composition (basic and acidic residues); sequence REAMVAETEHEPASHELPDDKRE. Residues 1345–1356 show a composition bias toward low complexity; sequence VPSSTVPLPSTP. Residues 1378–1392 are compositionally biased toward basic and acidic residues; sequence SIEEEIPRTPGRDIL. Over residues 1418 to 1427 the composition is skewed to low complexity; that stretch reads LTGSSLTLSS. Basic residues-rich tracts occupy residues 1577 to 1587 and 1681 to 1690; these read LPKRRPGRPRR and KPKRQWRRQK. The span at 1699–1710 shows a compositional bias: pro residues; that stretch reads IPSPEYSPPQPQ. Positions 1840–1845 match the RxxxRR motif motif; it reads RSEQRR. In terms of domain architecture, SET spans 1869-1986; the sequence is KKLKFCKSHI…VNEEITYDYK (118 aa). Residue Tyr1985 coordinates S-adenosyl-L-methionine. A Post-SET domain is found at 1992–2008; it reads VKIPCLCGSENCRGTLN.

Belongs to the class V-like SAM-binding methyltransferase superfamily. In terms of assembly, component of the SET1B/COMPASS complex.

Its subcellular location is the nucleus speckle. It is found in the chromosome. The catalysed reaction is L-lysyl(4)-[histone H3] + 3 S-adenosyl-L-methionine = N(6),N(6),N(6)-trimethyl-L-lysyl(4)-[histone H3] + 3 S-adenosyl-L-homocysteine + 3 H(+). Its function is as follows. Histone methyltransferase that specifically methylates 'Lys-4' of histone H3, when part of the SET1 histone methyltransferase (HMT) complex, but not if the neighboring 'Lys-9' residue is already methylated. H3 'Lys-4' methylation represents a specific tag for epigenetic transcriptional activation. In Gallus gallus (Chicken), this protein is Histone-lysine N-methyltransferase SETD1B (SETD1B).